Consider the following 169-residue polypeptide: Peptide deformylase 1 (169 aa).

2 residues coordinate Fe cation: Cys-92 and His-134. The active site involves Glu-135. His-138 is a Fe cation binding site.

This sequence belongs to the polypeptide deformylase family. It depends on Fe(2+) as a cofactor.

It catalyses the reaction N-terminal N-formyl-L-methionyl-[peptide] + H2O = N-terminal L-methionyl-[peptide] + formate. Functionally, removes the formyl group from the N-terminal Met of newly synthesized proteins. Requires at least a dipeptide for an efficient rate of reaction. N-terminal L-methionine is a prerequisite for activity but the enzyme has broad specificity at other positions. This chain is Peptide deformylase 1, found in Ralstonia nicotianae (strain ATCC BAA-1114 / GMI1000) (Ralstonia solanacearum).